We begin with the raw amino-acid sequence, 380 residues long: Cytochrome b (380 aa).

A run of 4 helical transmembrane segments spans residues 34–54 (FGSL…LLAT), 78–99 (WLIR…YLHI), 114–134 (WNTG…GYVL), and 179–199 (FFAL…IHLA). Heme b-binding residues include His84 and His98. Heme b is bound by residues His183 and His197. A ubiquinone is bound at residue His202. Transmembrane regions (helical) follow at residues 227–247 (LKDI…ALFS), 289–309 (LGGV…PFLH), 321–341 (LSQI…WIGS), and 348–368 (FIII…ILFP).

The protein belongs to the cytochrome b family. In terms of assembly, the cytochrome bc1 complex contains 11 subunits: 3 respiratory subunits (MT-CYB, CYC1 and UQCRFS1), 2 core proteins (UQCRC1 and UQCRC2) and 6 low-molecular weight proteins (UQCRH/QCR6, UQCRB/QCR7, UQCRQ/QCR8, UQCR10/QCR9, UQCR11/QCR10 and a cleavage product of UQCRFS1). This cytochrome bc1 complex then forms a dimer. The cofactor is heme b.

It is found in the mitochondrion inner membrane. Its function is as follows. Component of the ubiquinol-cytochrome c reductase complex (complex III or cytochrome b-c1 complex) that is part of the mitochondrial respiratory chain. The b-c1 complex mediates electron transfer from ubiquinol to cytochrome c. Contributes to the generation of a proton gradient across the mitochondrial membrane that is then used for ATP synthesis. The polypeptide is Cytochrome b (MT-CYB) (Callipepla gambelii (Gambel's quail)).